Here is a 331-residue protein sequence, read N- to C-terminus: Adenosine deaminase (331 aa).

Histidine 12 and histidine 14 together coordinate Zn(2+). The substrate site is built by histidine 14, aspartate 16, and glycine 170. Histidine 197 is a binding site for Zn(2+). Glutamate 200 serves as the catalytic Proton donor. Residue aspartate 278 participates in Zn(2+) binding.

It belongs to the metallo-dependent hydrolases superfamily. Adenosine and AMP deaminases family. Adenosine deaminase subfamily. The cofactor is Zn(2+).

The catalysed reaction is adenosine + H2O + H(+) = inosine + NH4(+). It catalyses the reaction 2'-deoxyadenosine + H2O + H(+) = 2'-deoxyinosine + NH4(+). Its function is as follows. Catalyzes the hydrolytic deamination of adenosine and 2-deoxyadenosine. This Vibrio vulnificus (strain YJ016) protein is Adenosine deaminase.